The primary structure comprises 533 residues: Calcium-dependent protein kinase 12 (533 aa).

Positions 1–77 (MGNCFTKTYE…RASGGGGEMG (77 aa)) are disordered. Residue glycine 2 is the site of N-myristoyl glycine attachment. A compositionally biased stretch (basic and acidic residues) spans 26–38 (ERSKARGGDEPGT). A compositionally biased stretch (low complexity) spans 57–69 (GSSSAAGALSRRA). The Protein kinase domain maps to 91–349 (YQLDRKLGSG…ASQALEHRWL (259 aa)). ATP contacts are provided by residues 97 to 105 (LGSGQFGTT) and lysine 120. Residue aspartate 215 is the Proton acceptor of the active site. The autoinhibitory domain stretch occupies residues 354–384 (ASDRPIDSAVLSRMKQFKAMNKLKQLALKVI). 4 consecutive EF-hand domains span residues 391–426 (EEIKGLKQMFNNMDTDRSGTITVEELKVGLTKLGSR), 427–462 (ISEAEVQKLMEAVDVDKSGSIDYSEFLTAMINKHKL), 463–498 (EKEEDLLRAFQHFDKDNSGYITRDELEQAMAEYGMG), and 499–533 (DEANIKQVLDEVDKDKDGRIDYEEFVEMMRKGIQT). Aspartate 404, aspartate 406, serine 408, threonine 410, glutamate 415, aspartate 440, aspartate 442, serine 444, serine 446, glutamate 451, aspartate 476, aspartate 478, serine 480, tyrosine 482, glutamate 487, aspartate 511, aspartate 513, aspartate 515, arginine 517, and glutamate 522 together coordinate Ca(2+).

Belongs to the protein kinase superfamily. Ser/Thr protein kinase family. CDPK subfamily. Expressed in roots, leaf blades and developing seeds. Expressed in vascular tissues of roots and leaf blades. Expressed in the phloem tissue of the large vascular bundle in leaf blades.

Its subcellular location is the membrane. The catalysed reaction is L-seryl-[protein] + ATP = O-phospho-L-seryl-[protein] + ADP + H(+). The enzyme catalyses L-threonyl-[protein] + ATP = O-phospho-L-threonyl-[protein] + ADP + H(+). With respect to regulation, activated by calcium. Autophosphorylation may play an important role in the regulation of the kinase activity. Functionally, may play a role in signal transduction pathways that involve calcium as a second messenger. Functions in signal transduction pathways that positively regulate responses to low-nitrogen. Functions in multiple signaling pathways, positively regulating salt tolerance and negatively modulating rice blast fungus resistance. May promote tolerance to salt stress by negatively regulating NADPH oxidase and positively regulating reactive oxygen species (ROS) scavengers. The polypeptide is Calcium-dependent protein kinase 12 (Oryza sativa subsp. japonica (Rice)).